The primary structure comprises 374 residues: Glutamate 5-kinase (374 aa).

K17 is a binding site for ATP. Residues S57, D144, and N156 each coordinate substrate. ATP-binding positions include 176–177 (SD) and 218–224 (TGGMVTK). The 79-residue stretch at 280 to 358 (QGALVLDDGA…RELARELGPA (79 aa)) folds into the PUA domain.

The protein belongs to the glutamate 5-kinase family.

The protein localises to the cytoplasm. The enzyme catalyses L-glutamate + ATP = L-glutamyl 5-phosphate + ADP. Its pathway is amino-acid biosynthesis; L-proline biosynthesis; L-glutamate 5-semialdehyde from L-glutamate: step 1/2. Catalyzes the transfer of a phosphate group to glutamate to form L-glutamate 5-phosphate. The chain is Glutamate 5-kinase from Streptomyces coelicolor (strain ATCC BAA-471 / A3(2) / M145).